We begin with the raw amino-acid sequence, 437 residues long: MTHELSPQLLESFSRDFNADPKNQVISRAARRSGLLEAAYNPAVSQRLNRTFSIELDTDNVTNQQQSGRCWLFSTLNVVRHNFGKANKAKNFTFSQSYNFFWDKIERANYFYDRIIATADRPLTDRTVRGYFDWCQTDGGQWHMAASLIAKYGVVPRYAMPESFNSNHSQALDMVLADKERKDALTLRRLAQADDQEKLEAARTDFLSQIYRIMATALGEPPKTFDLEFRDDDKNYHLDKGLTPVQFYKKYCATDLDDYVVLANAPDHEMNRVLHLGFEDNIKGGYPNLFINVPMEYLEDAAIAQLKDGEAVWFGNAVGRQMDRKTGFMDLDLYQLDQLLDIDSHLSKADRLATGIGESSHDMALVGVDVDGGQVRQWKVENSWGDKSGEKGYFTMSADWFREYTYEVAVQKKHVPAEILDLLKNQPIELDPWDSLI.

Residues C70, H361, and N382 contribute to the active site.

Belongs to the peptidase C1 family.

Its subcellular location is the cytoplasm. This chain is Aminopeptidase W (pepW), found in Lactobacillus delbrueckii subsp. lactis.